A 2211-amino-acid polypeptide reads, in one-letter code: Orsellinic acid synthase (2211 aa).

The N-terminal acylcarrier protein transacylase domain (SAT) stretch occupies residues 44–246; sequence TFREQVSDAI…TVAVVHSLYH (203 aa). The region spanning 380–805 is the Ketosynthase family 3 (KS3) domain; it reads WDDIAIVGMA…GSNAAVIIGE (426 aa). Residues Cys-549, His-684, and His-724 each act as for beta-ketoacyl synthase activity in the active site. Residues 910-1228 are malonyl-CoA:ACP transacylase (MAT) domain; sequence VFIFSGQGSQ…QLTTLKKNVP (319 aa). Ser-1006 acts as the For acyl/malonyl transferase activity in catalysis. Residues 1309–1440 are N-terminal hotdog fold; it reads HAIQKLSHGA…GVVKQSNMAS (132 aa). One can recognise a PKS/mFAS DH domain in the interval 1309–1629; sequence HAIQKLSHGA…FQHVKIPLIE (321 aa). The segment at 1334 to 1573 is product template (PT) domain; that stretch reads EFIEGHLVCG…GATTLRAPVV (240 aa). The active-site Proton acceptor; for dehydratase activity is His-1339. Residues 1473–1629 form a C-terminal hotdog fold region; the sequence is VQVFSKRAMY…FQHVKIPLIE (157 aa). Asp-1537 acts as the Proton donor; for dehydratase activity in catalysis. Carrier domains lie at 1681 to 1755 and 1787 to 1865; these read AAPE…EALS and STVD…VKRP. Residue Ser-1715 is modified to O-(pantetheine 4'-phosphoryl)serine. The tract at residues 1755-1786 is disordered; the sequence is SPTPVGNDVDNDSPTPGSERGSDSAISTPASV. At Ser-1824 the chain carries O-(pantetheine 4'-phosphoryl)serine. The interval 1937–2204 is thioesterase (TE) domain; sequence SGKSPLFLIH…AAVSAALVDA (268 aa).

The enzyme catalyses 3 malonyl-CoA + acetyl-CoA + 2 H(+) = orsellinate + 3 CO2 + 4 CoA. It participates in secondary metabolite biosynthesis. In terms of biological role, non-reducing polyketide synthase; part of the gene cluster that mediates the biosynthesis of the bibenzoquinone oosporein, a metabolite required for fungal virulence that acts by evading host immunity to facilitate fungal multiplication in insects. The non-reducing polyketide synthase OpS1 produces orsellinic acid by condensing acetyl-CoA with 3 malonyl-CoA units. Orsellinic acid is then hydroxylated to benzenetriol by the hydroxylase OpS4. The intermediate is oxidized either nonenzymatically to 5,5'-dideoxy-oosporein or enzymatically to benzenetetrol by the oxidoreductase OpS7. The latter is further dimerized to oosporein by the catalase OpS5. OpS6 probably functions en route for protecting cells against oxidative stress by scavenging any leaked free radical form of benzenetetrol by activating the thiol group of glutathione. This is Orsellinic acid synthase from Beauveria bassiana (strain ARSEF 2860) (White muscardine disease fungus).